The chain runs to 195 residues: Imidazoleglycerol-phosphate dehydratase (195 aa).

The protein belongs to the imidazoleglycerol-phosphate dehydratase family.

The protein localises to the cytoplasm. It catalyses the reaction D-erythro-1-(imidazol-4-yl)glycerol 3-phosphate = 3-(imidazol-4-yl)-2-oxopropyl phosphate + H2O. It functions in the pathway amino-acid biosynthesis; L-histidine biosynthesis; L-histidine from 5-phospho-alpha-D-ribose 1-diphosphate: step 6/9. This Geobacillus kaustophilus (strain HTA426) protein is Imidazoleglycerol-phosphate dehydratase.